We begin with the raw amino-acid sequence, 151 residues long: Large ribosomal subunit protein uL22 (151 aa).

The tract at residues 1-25 is disordered; sequence MARINYSVKEDPETTSKAMGSELHI.

It belongs to the universal ribosomal protein uL22 family. In terms of assembly, part of the 50S ribosomal subunit.

Functionally, this protein binds specifically to 23S rRNA. It makes multiple contacts with different domains of the 23S rRNA in the assembled 50S subunit and ribosome. Its function is as follows. The globular domain of the protein is located near the polypeptide exit tunnel on the outside of the subunit, while an extended beta-hairpin is found that lines the wall of the exit tunnel in the center of the 70S ribosome. The sequence is that of Large ribosomal subunit protein uL22 from Methanosarcina barkeri (strain Fusaro / DSM 804).